The following is a 167-amino-acid chain: UPF0587 protein F46B6.12 (167 aa).

The Zn(2+) site is built by Cys34, Cys37, Cys68, and Cys71.

It belongs to the UPF0587 family.

The chain is UPF0587 protein F46B6.12 from Caenorhabditis elegans.